A 1032-amino-acid chain; its full sequence is Putative oxidoreductase YgfK (1032 aa).

The region spanning 928–958 (RFQTLHLDAYCNECGNCAQFCPWNGKPYKDK) is the 4Fe-4S ferredoxin-type domain. Residues Cys938, Cys941, Cys944, and Cys948 each contribute to the [4Fe-4S] cluster site.

Requires [4Fe-4S] cluster as cofactor.

Could be an iron-sulfur flavoprotein with NADPH:O(2) oxidoreductase activity. The sequence is that of Putative oxidoreductase YgfK (ygfK) from Escherichia coli O157:H7.